Reading from the N-terminus, the 316-residue chain is Porphobilinogen deaminase (316 aa).

Position 245 is an S-(dipyrrolylmethanemethyl)cysteine (Cys-245).

The protein belongs to the HMBS family. Monomer. The cofactor is dipyrromethane.

It catalyses the reaction 4 porphobilinogen + H2O = hydroxymethylbilane + 4 NH4(+). It functions in the pathway porphyrin-containing compound metabolism; protoporphyrin-IX biosynthesis; coproporphyrinogen-III from 5-aminolevulinate: step 2/4. Its pathway is porphyrin-containing compound metabolism; chlorophyll biosynthesis. Its function is as follows. Tetrapolymerization of the monopyrrole PBG into the hydroxymethylbilane pre-uroporphyrinogen in several discrete steps. The polypeptide is Porphobilinogen deaminase (Prochlorococcus marinus (strain MIT 9515)).